The following is a 58-amino-acid chain: Succinate dehydrogenase subunit 8A, mitochondrial (58 aa).

In terms of assembly, component of complex II composed of eight subunits in plants: four classical SDH subunits SDH1, SDH2, SDH3 and SDH4 (a flavoprotein (FP), an iron-sulfur protein (IP), and a cytochrome b composed of a large and a small subunit.), as well as four subunits unknown in mitochondria from bacteria and heterotrophic eukaryotes.

The protein localises to the mitochondrion inner membrane. It participates in carbohydrate metabolism; tricarboxylic acid cycle. The polypeptide is Succinate dehydrogenase subunit 8A, mitochondrial (Oryza sativa subsp. japonica (Rice)).